A 710-amino-acid polypeptide reads, in one-letter code: Probable threonine--tRNA ligase 1, cytoplasmic (710 aa).

A disordered region spans residues 1–35; it reads MSDSQENKPVETPTEVKPVAEKKPAAEKKEKKPAV. Residues 18-33 show a composition bias toward basic and acidic residues; that stretch reads PVAEKKPAAEKKEKKP. Residues 72–137 enclose the TGS domain; sequence KEEPINVTLP…EADCNLQLCK (66 aa).

This sequence belongs to the class-II aminoacyl-tRNA synthetase family.

It localises to the cytoplasm. The enzyme catalyses tRNA(Thr) + L-threonine + ATP = L-threonyl-tRNA(Thr) + AMP + diphosphate + H(+). The protein is Probable threonine--tRNA ligase 1, cytoplasmic (thrS1) of Dictyostelium discoideum (Social amoeba).